We begin with the raw amino-acid sequence, 324 residues long: MMEKLKSEQFPLSPSAEGCASPPRGDGDARGKQEGTTAETGEHRLPEELNGVAKETAHHATELKKEVAVIELSRRGGSADIKGRELKAELSHKVQTTELCRPPIPLPLPPRDPLSDTRMVQLSPPAFPLPARAMLYSNMTTPLATINSGFAGDAEQYGMYPSNRVKRRPAPYEVEINDGSQPKIVRRIFTNSRERWRQQNVNGAFAELRKLIPTHPPDKKLSKNEILRLAMKYINFLAKLLNDQDDMVGGEAPARANRDSRDATLVRDDLLQEMLSPNSSCGSLLDGDASPESFTEDQDSSVESRPSARGLHHSSLPLDGNAQR.

The segment at 1–49 (MMEKLKSEQFPLSPSAEGCASPPRGDGDARGKQEGTTAETGEHRLPEEL) is disordered. The bHLH domain maps to 185–237 (VRRIFTNSRERWRQQNVNGAFAELRKLIPTHPPDKKLSKNEILRLAMKYINFL). Residues 276-324 (SPNSSCGSLLDGDASPESFTEDQDSSVESRPSARGLHHSSLPLDGNAQR) form a disordered region.

Expressed in hemopoietic and endothelial lineages. Isoform beta emerges first, expressing in the entire anterior and posterior lateral mesoderm (ALM and PLM respectively), and in the ventral wall of the dorsal aorta, where definitive hemopoiesis begins. Isoform alpha expresses later as two pairs of stripes in the PLM and ALM, and becomes restricted to the intermediate cell mass (ICM) by the 18-somite stage. The ICM is the key site of primitive hemopoiesis, giving rise to the erythroid lineage. Also expressed in all stages of endocardial cell migration and in the developing midbrain, hindbrain and spinal cord. In adults, expressed in the main hemopoietic organs, namely the kidney (where isoform alpha is the predominant isoform) and the spleen. Also expressed in the liver, gill and gonads.

It localises to the nucleus. Its function is as follows. Transcription factor that plays a pivotal role in hemopoietic and endothelial development, acting synergistically with lmo2 and downstream of clo. Specifies mesodermal precursors to a hemangioblast cell fate. Hemangioblasts are bipotential precursors of blood and endothelium, and in the absence of hemopoietic induction cues such as gata1, tal1/scl-lmo2-induced hemangioblasts differentiate into endothelial cells. Isoform alpha and isoform beta are redundant for the initiation of primitive hemopoiesis but have distinct roles in the regulation of primitive erythroid differentiation and definitive hemopoietic stem cell specification, most likely due to differences in expression levels. Specification of definitive hemopoietic stem cells requires isoform beta. DNA binding is required for erythroid maturation, but not for its other hemopoietic functions. Endothelial roles include development of the dorsal aorta, the site of definitive hemopoiesis in the embryo. Required for angiogenesis but not angioblast specification. Has an additional role in endocardium formation during heart development. May play a role in central nervous system development. The sequence is that of T-cell acute lymphocytic leukemia protein 1 homolog from Danio rerio (Zebrafish).